The sequence spans 651 residues: PTS system N-acetylglucosamine-specific EIICBA component (651 aa).

A PTS EIIC type-1 domain is found at 1–371 (MNILGFFQRL…FNLKTPGRED (371 aa)). 12 consecutive transmembrane segments (helical) span residues 16-36 (LPIA…PDLL), 40-60 (FIAQ…AIGV), 70-90 (GSAA…MVTI), 92-112 (PEIN…GAVY), 132-152 (FVPI…GYVW), 165-185 (WIVS…RLLI), 192-212 (VLNT…GTVF), 232-252 (GFFP…YLAA), 264-284 (LLSV…EFLF), 285-305 (LFLA…SLFI), 308-328 (ALGI…VLMY), and 339-359 (MLLV…SAVI). A PTS EIIB type-1 domain is found at 390–472 (TQLATSYIAA…KKVVTRGPVA (83 aa)). Cys-412 functions as the Phosphocysteine intermediate; for EIIB activity in the catalytic mechanism. Position 412 is a phosphocysteine; by EIIA (Cys-412). In terms of domain architecture, PTS EIIA type-1 spans 519-623 (DEAFASKAVG…SMISPVVCSN (105 aa)). 2 residues coordinate Zn(2+): His-556 and His-571. His-571 serves as the catalytic Tele-phosphohistidine intermediate; for EIIA activity. Position 571 is a phosphohistidine; by HPr (His-571).

Zn(2+) is required as a cofactor.

It is found in the cell inner membrane. It catalyses the reaction N(pros)-phospho-L-histidyl-[protein] + N-acetyl-D-glucosamine(out) = N-acetyl-D-glucosamine 6-phosphate(in) + L-histidyl-[protein]. In terms of biological role, the phosphoenolpyruvate-dependent sugar phosphotransferase system (sugar PTS), a major carbohydrate active transport system, catalyzes the phosphorylation of incoming sugar substrates concomitantly with their translocation across the cell membrane. This system is involved in N-acetylglucosamine transport. This Klebsiella pneumoniae protein is PTS system N-acetylglucosamine-specific EIICBA component (nagE).